A 140-amino-acid polypeptide reads, in one-letter code: Transcription antitermination protein NusB (140 aa).

The protein belongs to the NusB family.

Involved in transcription antitermination. Required for transcription of ribosomal RNA (rRNA) genes. Binds specifically to the boxA antiterminator sequence of the ribosomal RNA (rrn) operons. This Streptococcus pneumoniae (strain JJA) protein is Transcription antitermination protein NusB.